A 502-amino-acid polypeptide reads, in one-letter code: Type II methyltransferase M.HincII (502 aa).

It belongs to the N(4)/N(6)-methyltransferase family.

The enzyme catalyses a 2'-deoxyadenosine in DNA + S-adenosyl-L-methionine = an N(6)-methyl-2'-deoxyadenosine in DNA + S-adenosyl-L-homocysteine + H(+). Functionally, a gamma subtype methylase that recognizes the double-stranded sequence 5'-GTYRAC-3', methylates A-5 on both strands, and protects the DNA from cleavage by the HincII endonuclease. This is Type II methyltransferase M.HincII from Haemophilus influenzae.